A 234-amino-acid polypeptide reads, in one-letter code: Large ribosomal subunit protein uL1 (234 aa).

This sequence belongs to the universal ribosomal protein uL1 family. As to quaternary structure, part of the 50S ribosomal subunit.

In terms of biological role, binds directly to 23S rRNA. The L1 stalk is quite mobile in the ribosome, and is involved in E site tRNA release. Its function is as follows. Protein L1 is also a translational repressor protein, it controls the translation of the L11 operon by binding to its mRNA. The sequence is that of Large ribosomal subunit protein uL1 from Escherichia coli (strain 55989 / EAEC).